A 307-amino-acid polypeptide reads, in one-letter code: 4-diphosphocytidyl-2-C-methyl-D-erythritol kinase (307 aa).

Lys14 is an active-site residue. 107-117 contributes to the ATP binding site; that stretch reads PVAGGMAGGSA. Asp149 is a catalytic residue.

Belongs to the GHMP kinase family. IspE subfamily.

It catalyses the reaction 4-CDP-2-C-methyl-D-erythritol + ATP = 4-CDP-2-C-methyl-D-erythritol 2-phosphate + ADP + H(+). Its pathway is isoprenoid biosynthesis; isopentenyl diphosphate biosynthesis via DXP pathway; isopentenyl diphosphate from 1-deoxy-D-xylulose 5-phosphate: step 3/6. Functionally, catalyzes the phosphorylation of the position 2 hydroxy group of 4-diphosphocytidyl-2C-methyl-D-erythritol. This Thermobifida fusca (strain YX) protein is 4-diphosphocytidyl-2-C-methyl-D-erythritol kinase.